Consider the following 203-residue polypeptide: Thymidylate kinase (203 aa).

10-17 (GIDGAGKS) contacts ATP.

This sequence belongs to the thymidylate kinase family.

The enzyme catalyses dTMP + ATP = dTDP + ADP. Its function is as follows. Phosphorylation of dTMP to form dTDP in both de novo and salvage pathways of dTTP synthesis. This is Thymidylate kinase from Cupriavidus taiwanensis (strain DSM 17343 / BCRC 17206 / CCUG 44338 / CIP 107171 / LMG 19424 / R1) (Ralstonia taiwanensis (strain LMG 19424)).